The chain runs to 92 residues: Small ribosomal subunit protein uS19c (92 aa).

The protein belongs to the universal ribosomal protein uS19 family.

Its subcellular location is the plastid. It localises to the chloroplast. Its function is as follows. Protein S19 forms a complex with S13 that binds strongly to the 16S ribosomal RNA. In Porphyra purpurea (Red seaweed), this protein is Small ribosomal subunit protein uS19c (rps19).